We begin with the raw amino-acid sequence, 434 residues long: F-box only protein 15 (434 aa).

One can recognise an F-box domain in the interval 1–41 (MPSEILLKIFSYLDAVSLLCAGCVSRRFYHLANDNFIWIRI).

Directly interacts with SKP1 and CUL1.

Functionally, substrate-recognition component of the SCF (SKP1-CUL1-F-box protein)-type E3 ubiquitin ligase complex. The polypeptide is F-box only protein 15 (FBXO15) (Macaca fascicularis (Crab-eating macaque)).